We begin with the raw amino-acid sequence, 293 residues long: Ribosomal protein L11 methyltransferase (293 aa).

Residues threonine 145, glycine 166, aspartate 188, and asparagine 230 each contribute to the S-adenosyl-L-methionine site.

This sequence belongs to the methyltransferase superfamily. PrmA family.

Its subcellular location is the cytoplasm. It carries out the reaction L-lysyl-[protein] + 3 S-adenosyl-L-methionine = N(6),N(6),N(6)-trimethyl-L-lysyl-[protein] + 3 S-adenosyl-L-homocysteine + 3 H(+). Its function is as follows. Methylates ribosomal protein L11. This Klebsiella pneumoniae subsp. pneumoniae (strain ATCC 700721 / MGH 78578) protein is Ribosomal protein L11 methyltransferase.